The chain runs to 93 residues: Conotoxin Mr105 (93 aa).

Residues 1–22 form the signal peptide; it reads MQRGAVLLGVVALLVLWPQAGA. A propeptide spanning residues 23–33 is cleaved from the precursor; that stretch reads ELYDVNDPDVR.

It belongs to the F superfamily. In terms of processing, contains 4 disulfide bonds. As to expression, expressed by the venom duct.

It is found in the secreted. This is Conotoxin Mr105 from Conus marmoreus (Marble cone).